The sequence spans 422 residues: Charged multivesicular body protein 7 (422 aa).

Positions 234–304 form a coiled coil; the sequence is KLLSERLQSA…ERISAAETDR (71 aa). The interval 394-422 is disordered; the sequence is RPTEWKMDQAAHSPADGSFLRSVPEPMLQ.

It belongs to the SNF7 family.

Its subcellular location is the cytoplasm. The protein localises to the nucleus envelope. In terms of biological role, ESCRT-III-like protein required to recruit the ESCRT-III complex to the nuclear envelope during late anaphase. Together with SPAST, the ESCRT-III complex promotes nuclear envelope sealing and mitotic spindle disassembly during late anaphase. Plays a role in the endosomal sorting pathway. The sequence is that of Charged multivesicular body protein 7 (chmp7) from Xenopus laevis (African clawed frog).